The sequence spans 225 residues: NAD(P)H-quinone oxidoreductase subunit K, chloroplastic (225 aa).

[4Fe-4S] cluster-binding residues include C43, C44, C108, and C139.

This sequence belongs to the complex I 20 kDa subunit family. In terms of assembly, NDH is composed of at least 16 different subunits, 5 of which are encoded in the nucleus. [4Fe-4S] cluster is required as a cofactor.

Its subcellular location is the plastid. It is found in the chloroplast thylakoid membrane. The catalysed reaction is a plastoquinone + NADH + (n+1) H(+)(in) = a plastoquinol + NAD(+) + n H(+)(out). It carries out the reaction a plastoquinone + NADPH + (n+1) H(+)(in) = a plastoquinol + NADP(+) + n H(+)(out). In terms of biological role, NDH shuttles electrons from NAD(P)H:plastoquinone, via FMN and iron-sulfur (Fe-S) centers, to quinones in the photosynthetic chain and possibly in a chloroplast respiratory chain. The immediate electron acceptor for the enzyme in this species is believed to be plastoquinone. Couples the redox reaction to proton translocation, and thus conserves the redox energy in a proton gradient. The polypeptide is NAD(P)H-quinone oxidoreductase subunit K, chloroplastic (Eucalyptus globulus subsp. globulus (Tasmanian blue gum)).